Consider the following 663-residue polypeptide: UvrABC system protein B (663 aa).

The Helicase ATP-binding domain maps to 31–271 (DNIESGEKAQ…EQSISKIQAE (241 aa)). 44–51 (GATGTGKT) contributes to the ATP binding site. The Beta-hairpin motif lies at 97–120 (YYDYYQPEAYVPSSDTYIEKDSSV). The Helicase C-terminal domain maps to 435–601 (QMDDLLGEIN…TIKKDIRDLI (167 aa)). In terms of domain architecture, UVR spans 627-662 (QEAIKQLQKNMQEAAELLDFELAAQLRDLILELKAI).

The protein belongs to the UvrB family. Forms a heterotetramer with UvrA during the search for lesions. Interacts with UvrC in an incision complex.

The protein resides in the cytoplasm. In terms of biological role, the UvrABC repair system catalyzes the recognition and processing of DNA lesions. A damage recognition complex composed of 2 UvrA and 2 UvrB subunits scans DNA for abnormalities. Upon binding of the UvrA(2)B(2) complex to a putative damaged site, the DNA wraps around one UvrB monomer. DNA wrap is dependent on ATP binding by UvrB and probably causes local melting of the DNA helix, facilitating insertion of UvrB beta-hairpin between the DNA strands. Then UvrB probes one DNA strand for the presence of a lesion. If a lesion is found the UvrA subunits dissociate and the UvrB-DNA preincision complex is formed. This complex is subsequently bound by UvrC and the second UvrB is released. If no lesion is found, the DNA wraps around the other UvrB subunit that will check the other stand for damage. This chain is UvrABC system protein B, found in Streptococcus equi subsp. zooepidemicus (strain MGCS10565).